We begin with the raw amino-acid sequence, 644 residues long: Exoribonuclease 2 (644 aa).

The RNB domain occupies 189–516 (REDLTSLDFV…NHRLLKAVIK (328 aa)). Residues 561–643 (GTRFAAEIVD…ETRSIIARPV (83 aa)) form the S1 motif domain.

The protein belongs to the RNR ribonuclease family. RNase II subfamily.

It is found in the cytoplasm. The catalysed reaction is Exonucleolytic cleavage in the 3'- to 5'-direction to yield nucleoside 5'-phosphates.. Involved in mRNA degradation. Hydrolyzes single-stranded polyribonucleotides processively in the 3' to 5' direction. The protein is Exoribonuclease 2 of Shigella flexneri.